The chain runs to 189 residues: Threonylcarbamoyl-AMP synthase (189 aa).

Residues 9-189 (ASAQRKLSVY…IDGETGKRLR (181 aa)) enclose the YrdC-like domain.

The protein belongs to the SUA5 family. TsaC subfamily.

The protein localises to the cytoplasm. It catalyses the reaction L-threonine + hydrogencarbonate + ATP = L-threonylcarbamoyladenylate + diphosphate + H2O. Its function is as follows. Required for the formation of a threonylcarbamoyl group on adenosine at position 37 (t(6)A37) in tRNAs that read codons beginning with adenine. Catalyzes the conversion of L-threonine, HCO(3)(-)/CO(2) and ATP to give threonylcarbamoyl-AMP (TC-AMP) as the acyladenylate intermediate, with the release of diphosphate. The protein is Threonylcarbamoyl-AMP synthase of Neisseria gonorrhoeae (strain ATCC 700825 / FA 1090).